The following is a 186-amino-acid chain: Calcium-binding protein NCSA (186 aa).

EF-hand domains are found at residues 40–58 (SGTI…MGVG), 66–93 (LFNV…ITRG), 94–129 (TPEE…MYKL), and 142–177 (DPHD…NPDI). Ca(2+)-binding residues include Asp107, Asp109, Asn111, Tyr113, Glu118, Asp155, Asp157, Asp159, Tyr161, and Glu166.

It belongs to the recoverin family.

Its function is as follows. May prevent cells from entering development prematurely in the presence of environmental nutrients. The sequence is that of Calcium-binding protein NCSA (ncsA) from Dictyostelium discoideum (Social amoeba).